The sequence spans 210 residues: NDR1/HIN1-like protein 12 (210 aa).

Residues 23–43 (GVIIGFIIIVLITIFLVWIIL) traverse the membrane as a helical segment. The N-linked (GlcNAc...) asparagine glycan is linked to Asn61.

May form oligomers or be a component of larger protein complex in plasma membranes. As to expression, expressed in leaves, stems and flowers, and, to a lower extent, in siliques and roots.

It is found in the cell membrane. Functionally, may play a role in plant immunity. In Arabidopsis thaliana (Mouse-ear cress), this protein is NDR1/HIN1-like protein 12.